The primary structure comprises 155 residues: SsrA-binding protein (155 aa).

Residues 127–149 (KKDYDKRNDMRKKEAKREMERTF) show a composition bias toward basic and acidic residues. The disordered stretch occupies residues 127–155 (KKDYDKRNDMRKKEAKREMERTFKSKNQY).

The protein belongs to the SmpB family.

It is found in the cytoplasm. Required for rescue of stalled ribosomes mediated by trans-translation. Binds to transfer-messenger RNA (tmRNA), required for stable association of tmRNA with ribosomes. tmRNA and SmpB together mimic tRNA shape, replacing the anticodon stem-loop with SmpB. tmRNA is encoded by the ssrA gene; the 2 termini fold to resemble tRNA(Ala) and it encodes a 'tag peptide', a short internal open reading frame. During trans-translation Ala-aminoacylated tmRNA acts like a tRNA, entering the A-site of stalled ribosomes, displacing the stalled mRNA. The ribosome then switches to translate the ORF on the tmRNA; the nascent peptide is terminated with the 'tag peptide' encoded by the tmRNA and targeted for degradation. The ribosome is freed to recommence translation, which seems to be the essential function of trans-translation. The sequence is that of SsrA-binding protein from Lysinibacillus sphaericus (strain C3-41).